A 151-amino-acid chain; its full sequence is D-aminoacyl-tRNA deacylase (151 aa).

Residues 136–137 (GP) carry the Gly-cisPro motif, important for rejection of L-amino acids motif.

It belongs to the DTD family. In terms of assembly, homodimer.

Its subcellular location is the cytoplasm. The catalysed reaction is glycyl-tRNA(Ala) + H2O = tRNA(Ala) + glycine + H(+). It carries out the reaction a D-aminoacyl-tRNA + H2O = a tRNA + a D-alpha-amino acid + H(+). In terms of biological role, an aminoacyl-tRNA editing enzyme that deacylates mischarged D-aminoacyl-tRNAs. Also deacylates mischarged glycyl-tRNA(Ala), protecting cells against glycine mischarging by AlaRS. Acts via tRNA-based rather than protein-based catalysis; rejects L-amino acids rather than detecting D-amino acids in the active site. By recycling D-aminoacyl-tRNA to D-amino acids and free tRNA molecules, this enzyme counteracts the toxicity associated with the formation of D-aminoacyl-tRNA entities in vivo and helps enforce protein L-homochirality. This is D-aminoacyl-tRNA deacylase from Lactococcus lactis subsp. cremoris (strain SK11).